We begin with the raw amino-acid sequence, 216 residues long: Probable GTP-binding protein EngB (216 aa).

In terms of domain architecture, EngB-type G spans 27–201 (EGIEVAFAGR…REKLDTWFSE (175 aa)). Residues 35 to 42 (GRSNAGKS), 62 to 66 (GRTQL), 80 to 83 (DLPG), 147 to 150 (TKAD), and 180 to 182 (FSS) contribute to the GTP site. Mg(2+)-binding residues include S42 and T64.

This sequence belongs to the TRAFAC class TrmE-Era-EngA-EngB-Septin-like GTPase superfamily. EngB GTPase family. Requires Mg(2+) as cofactor.

Functionally, necessary for normal cell division and for the maintenance of normal septation. The protein is Probable GTP-binding protein EngB of Yersinia pseudotuberculosis serotype O:1b (strain IP 31758).